The following is a 304-amino-acid chain: Non-specific ribonucleoside hydrolase RihC (304 aa).

His233 is an active-site residue.

It belongs to the IUNH family. RihC subfamily.

Functionally, hydrolyzes both purine and pyrimidine ribonucleosides with a broad-substrate specificity. In Escherichia coli O8 (strain IAI1), this protein is Non-specific ribonucleoside hydrolase RihC.